A 163-amino-acid chain; its full sequence is MKWKALFTAAILQAQLPITEAQSFGLLDPKLCYLLDGILFIYGVILTALFLRVKFSRSADAPAYQQGQNQLYNELNLGRREEYDVLDKRRGRDPEMGGKPRRKNPQEGLYNELQKDKMAEAYSEIGMKGERRRGKGHDGLYQGLSTATKDTYDALHMQALPPR.

The N-terminal stretch at 1-21 is a signal peptide; that stretch reads MKWKALFTAAILQAQLPITEA. Over 22 to 30 the chain is Extracellular; sequence QSFGLLDPK. The helical transmembrane segment at 31 to 51 threads the bilayer; that stretch reads LCYLLDGILFIYGVILTALFL. At 52–163 the chain is on the cytoplasmic side; sequence RVKFSRSADA…ALHMQALPPR (112 aa). S58 bears the Phosphoserine mark. ITAM domains are found at residues 61-89, 99-127, and 130-158; these read APAYQQGQNQLYNELNLGRREEYDVLDKR, KPRRKNPQEGLYNELQKDKMAEAYSEIGM, and ERRRGKGHDGLYQGLSTATKDTYDALHMQ. Phosphotyrosine is present on residues Y64, Y72, Y83, Y110, Y122, Y141, and Y152. Over residues 83–98 the composition is skewed to basic and acidic residues; it reads YDVLDKRRGRDPEMGG. The segment at 83–111 is disordered; the sequence is YDVLDKRRGRDPEMGGKPRRKNPQEGLYN.

The protein belongs to the CD3Z/FCER1G family. In terms of assembly, the TCR-CD3 complex is composed of a CD3D/CD3E and a CD3G/CD3E heterodimers that preferentially associate with TCRalpha and TCRbeta, respectively, to form TCRalpha/CD3E/CD3G and TCRbeta/CD3G/CD3E trimers. In turn, the hexamer interacts with CD3Z homodimer to form the TCR-CD3 complex. Alternatively, TCRalpha and TCRbeta can be replaced by TCRgamma and TCRdelta. Interacts with SLA. Interacts with TRAT1. Interacts with DOCK2. Interacts with SLA2. Interacts with SHB. Interacts with ZAP70. Interacts (tyrosine phosphorylated) with SHC1 (via SH2 domain). Interacts with PTPRC. Interacts with CRK; this interaction regulates CD3Z phosphorylation. Interacts (on T cell side) with CD81, ICAM1 and CD9 at immunological synapses between antigen-presenting cells and T cells. Interacts with CD160. Interacts with LY6E. Interacts with LY6E. The signaling subunit of immunoglobulin gamma (IgG) Fc receptor complex. As a homodimer or a heterodimer with FCER1G, associates with the ligand binding subunit FCGR3A (via transmembrane domain); this interaction is a prerequisite for Fc receptor complex expression on the cell surface. Interacts with CD5. Phosphorylated on Tyr residues after T-cell receptor triggering by LCK in association with CD4/CD8.

The protein localises to the cell membrane. Functionally, part of the TCR-CD3 complex present on T-lymphocyte cell surface that plays an essential role in adaptive immune response. When antigen presenting cells (APCs) activate T-cell receptor (TCR), TCR-mediated signals are transmitted across the cell membrane by the CD3 chains CD3D, CD3E, CD3G and CD3Z. All CD3 chains contain immunoreceptor tyrosine-based activation motifs (ITAMs) in their cytoplasmic domain. Upon TCR engagement, these motifs become phosphorylated by Src family protein tyrosine kinases LCK and FYN, resulting in the activation of downstream signaling pathways. CD3Z ITAMs phosphorylation creates multiple docking sites for the protein kinase ZAP70 leading to ZAP70 phosphorylation and its conversion into a catalytically active enzyme. Plays an important role in intrathymic T-cell differentiation. Additionally, participates in the activity-dependent synapse formation of retinal ganglion cells (RGCs) in both the retina and dorsal lateral geniculate nucleus (dLGN). The polypeptide is T-cell surface glycoprotein CD3 zeta chain (CD247) (Sus scrofa (Pig)).